Here is a 471-residue protein sequence, read N- to C-terminus: Adenosylhomocysteinase (471 aa).

Substrate contacts are provided by Thr60, Asp135, and Glu196. Residue 197-199 coordinates NAD(+); sequence TTT. Positions 226 and 230 each coordinate substrate. NAD(+)-binding positions include Asn231, 260–265, Glu283, Asn318, 339–341, and Asn387; these read GYGDVG and IGH.

It belongs to the adenosylhomocysteinase family. It depends on NAD(+) as a cofactor.

Its subcellular location is the cytoplasm. The catalysed reaction is S-adenosyl-L-homocysteine + H2O = L-homocysteine + adenosine. The protein operates within amino-acid biosynthesis; L-homocysteine biosynthesis; L-homocysteine from S-adenosyl-L-homocysteine: step 1/1. Its function is as follows. May play a key role in the regulation of the intracellular concentration of adenosylhomocysteine. This is Adenosylhomocysteinase from Chlorobium limicola (strain DSM 245 / NBRC 103803 / 6330).